A 104-amino-acid polypeptide reads, in one-letter code: Large ribosomal subunit protein uL24 (104 aa).

This sequence belongs to the universal ribosomal protein uL24 family. Part of the 50S ribosomal subunit.

Functionally, one of two assembly initiator proteins, it binds directly to the 5'-end of the 23S rRNA, where it nucleates assembly of the 50S subunit. One of the proteins that surrounds the polypeptide exit tunnel on the outside of the subunit. The chain is Large ribosomal subunit protein uL24 from Clostridium beijerinckii (strain ATCC 51743 / NCIMB 8052) (Clostridium acetobutylicum).